We begin with the raw amino-acid sequence, 1576 residues long: MAKKKKDTKHTRLCEATGAWATKVLEDFRASGNDSYVFEQQLTNSERGIIHQMCRTMGLRSKSNGSGEERRLSLFKGDGISKSDKRRMYEARNQKEKEGDGISKSYSKHRYETRFQKAGGIRKTRISPKKLKCVSFPPEAKAVLHDLFTRYPPCDGDTTGTSLGIYTTGNVNSNWKDDFFKKPHMTKHDIENNVVSLSSRLKKERHFREIFEARSKLPIASFRDAIISAVESNQVVLIAGETGCGKTTQVPQYLLDHMWHSKKEACKIICTQPRRISAISVSDRISWERGETIGRTVGYKVRLQSEGGRESSVVFCTNGILLRVLIGKGVNSSVPDITHIIVDEIHERDSYSDFMLMILRDLLPSNPHLRLILMSATLDAERFSEYFGGCPVVRVPGFTYPVRTFFLDDALSVLNSDKNSHLLSAVKRDFKDEDKVSLDEAIDLAWTNDEFDCLVDLVSSEGSHEAYNYQNSTTGLTPLMVFAGKGRVSDVCKLLSVGADCTLKSKEGITALELAEKENQFETAQIIREHAGNIQSNSQQAQDLLDKYMATIKPEEVDVGLIVKLMKKICSDSKDGAILVFLPGWEEISKTKEKLLDDRFFAHSAKFIILCLHSRVPAEEQKKVFNRPPRGCRKIVLATNIAESAVTIDDVVYVIDSGRMKEKSYDPYNDVSTLQSSWVSKANAKQRAGRAGRCQAGICYHLYSKLRAASLPEYRVPEVMRMPVDELCLQVKMLDPNCNVNDFLQKLMDPPVAQSIENALIILKDIGALTPEEELTELGQKFGQLPVHPRISKMIYFAILVNCLDPALILACAADEKDPFTMPLSPGDRKKAAAAKHELASLYGDHSDHLATVAAFQCWKNAKASGQAKEFCSKYFISQVVMKRLDDLCRKLQGELNRHGVIPSSSSNCSLNAHDPGILRAVIAVGLYPMLGRMCPLSKNRTRSVIETIAGAKVRVPSLSNNVDMSSTKFDEALIVFDEITRGDWGVVIRSCTVLPTIPVLLFSREIAVSTTESYDAVKSDDEEDHKVGNVGDAMDIDKEVGRPGEKIMLGPENSVKVVVDRWLPFKVTAFEIAQMYILRERLMASILFKVKHPKENLPPHLGASMYAIASVLSYDSLAQSSVQTVAVQPITSVVDATSPRDDIPSTNPNELREHDPNTTPMGSKLELANKLGLGNMEESLPSNFADGNEQPDPNTSPVEDVSAATKQKKMQSESKRCKSLNNVDLGNIEENFGNMEENPPSDLAIGNEQTLPKLASNLDMGNMEENTPSDLANGNEKTEPNSANSMDLGNMEENTPSDLANGNKKKEPKSVSKLDLGSEKVSIPSNLVNGNEQHDLNIAPGEDASAAKQPEKKRSRSKKRKSGNNLDLGKMEKSKPSDLANENEQTEPKSANNLDLGNMKENTPSDLANENEQTELRLPNNSDYGNMEESLPLNLANGDEQPDPTTAPMEAAKQPKKKRSRSKKCKSVNNLDLGNMEENKPSDLANGNEQKDPESVNRLDPGKEKESIPSNLVSGNEQPDSNTAPAKKPKKKKRKLANNFDSVNNMEEKMPSTNVLSQGNKSGLIEEKPSIPSDQ.

The 64-residue stretch at 15-78 (EATGAWATKV…ERRLSLFKGD (64 aa)) folds into the R3H domain. Residues 227–396 (ISAVESNQVV…FGGCPVVRVP (170 aa)) form the Helicase ATP-binding domain. 240-247 (GETGCGKT) serves as a coordination point for ATP. The short motif at 343–346 (DEIH) is the DEIH box element. The region spanning 561–735 (LIVKLMKKIC…ELCLQVKMLD (175 aa)) is the Helicase C-terminal domain. 3 disordered regions span residues 1137–1165 (ATSPRDDIPSTNPNELREHDPNTTPMGSK), 1177–1223 (MEES…SLNN), and 1260–1576 (DMGN…PSDQ). Residues 1281–1301 (PNSANSMDLGNMEENTPSDLA) show a composition bias toward polar residues. The span at 1305–1319 (KKKEPKSVSKLDLGS) shows a compositional bias: basic and acidic residues. A PH1 motif is present at residues 1349-1360 (KQPEKKRSRSKK). The segment covering 1352–1363 (EKKRSRSKKRKS) has biased composition (basic residues). Residues 1381 to 1412 (ANENEQTEPKSANNLDLGNMKENTPSDLANEN) show a composition bias toward polar residues. The PH2 signature appears at 1454–1465 (KQPKKKRSRSKK). Basic residues predominate over residues 1455 to 1467 (QPKKKRSRSKKCK). A compositionally biased stretch (basic and acidic residues) spans 1490-1508 (EQKDPESVNRLDPGKEKES). The segment covering 1509–1524 (IPSNLVSGNEQPDSNT) has biased composition (polar residues). Residues 1528–1537 (KKPKKKKRKL) show a composition bias toward basic residues. The Nuclear localization signal signature appears at 1530-1537 (PKKKKRKL). Residues 1540–1562 (NFDSVNNMEEKMPSTNVLSQGNK) show a composition bias toward polar residues.

It belongs to the DExH box helicase family. As to quaternary structure, homodimer.

It localises to the nucleus. It catalyses the reaction ATP + H2O = ADP + phosphate + H(+). Its function is as follows. May function as an ATP-dependent RNA/DNA helicase. Binds DNA in vitro in a non-specific manner. This chain is DExH-box ATP-dependent RNA helicase DExH2, found in Arabidopsis thaliana (Mouse-ear cress).